The chain runs to 339 residues: O-methyltransferase 7 (339 aa).

The S-adenosyl-L-methionine site is built by glycine 186, aspartate 209, serine 232, phenylalanine 233, and lysine 246. The active-site Proton acceptor is histidine 250.

It belongs to the class I-like SAM-binding methyltransferase superfamily. Cation-independent O-methyltransferase family. COMT subfamily.

It catalyses the reaction (3,5-dichloro-2,4,6-trihydroxyphenyl)hexan-1-one + S-adenosyl-L-methionine = 1-(3,5-dichloro-2,6-dihydroxy-4-methoxyphenyl)hexan-1-one + S-adenosyl-L-homocysteine + H(+). The sequence is that of O-methyltransferase 7 (omt7) from Dictyostelium discoideum (Social amoeba).